The sequence spans 124 residues: Holo-[acyl-carrier-protein] synthase (124 aa).

2 residues coordinate Mg(2+): Asp8 and Glu56.

Belongs to the P-Pant transferase superfamily. AcpS family. It depends on Mg(2+) as a cofactor.

Its subcellular location is the cytoplasm. The catalysed reaction is apo-[ACP] + CoA = holo-[ACP] + adenosine 3',5'-bisphosphate + H(+). Its function is as follows. Transfers the 4'-phosphopantetheine moiety from coenzyme A to a Ser of acyl-carrier-protein. This Nitratidesulfovibrio vulgaris (strain ATCC 29579 / DSM 644 / CCUG 34227 / NCIMB 8303 / VKM B-1760 / Hildenborough) (Desulfovibrio vulgaris) protein is Holo-[acyl-carrier-protein] synthase.